Reading from the N-terminus, the 370-residue chain is tRNA 2-selenouridine synthase (370 aa).

The Rhodanese domain maps to 12–136 (FLEDVPMMDT…MRNFLLDTTR (125 aa)). Cysteine 95 (S-selanylcysteine intermediate) is an active-site residue.

This sequence belongs to the SelU family. In terms of assembly, monomer.

It carries out the reaction 5-methylaminomethyl-2-thiouridine(34) in tRNA + selenophosphate + (2E)-geranyl diphosphate + H2O + H(+) = 5-methylaminomethyl-2-selenouridine(34) in tRNA + (2E)-thiogeraniol + phosphate + diphosphate. The enzyme catalyses 5-methylaminomethyl-2-thiouridine(34) in tRNA + (2E)-geranyl diphosphate = 5-methylaminomethyl-S-(2E)-geranyl-thiouridine(34) in tRNA + diphosphate. The catalysed reaction is 5-methylaminomethyl-S-(2E)-geranyl-thiouridine(34) in tRNA + selenophosphate + H(+) = 5-methylaminomethyl-2-(Se-phospho)selenouridine(34) in tRNA + (2E)-thiogeraniol. It catalyses the reaction 5-methylaminomethyl-2-(Se-phospho)selenouridine(34) in tRNA + H2O = 5-methylaminomethyl-2-selenouridine(34) in tRNA + phosphate. Functionally, involved in the post-transcriptional modification of the uridine at the wobble position (U34) of tRNA(Lys), tRNA(Glu) and tRNA(Gln). Catalyzes the conversion of 2-thiouridine (S2U-RNA) to 2-selenouridine (Se2U-RNA). Acts in a two-step process involving geranylation of 2-thiouridine (S2U) to S-geranyl-2-thiouridine (geS2U) and subsequent selenation of the latter derivative to 2-selenouridine (Se2U) in the tRNA chain. This is tRNA 2-selenouridine synthase from Azotobacter vinelandii (strain DJ / ATCC BAA-1303).